The primary structure comprises 217 residues: Probable coenzyme A transferase subunit beta (217 aa).

E50 is an active-site residue.

Belongs to the 3-oxoacid CoA-transferase subunit B family. In terms of assembly, heterodimer of a subunit alpha and a subunit beta.

This chain is Probable coenzyme A transferase subunit beta (yodR), found in Bacillus subtilis (strain 168).